The chain runs to 478 residues: Melanopsin (478 aa).

Positions Met-1–Thr-14 are enriched in pro residues. Residues Met-1–Ser-32 are disordered. Residues Met-1 to Thr-72 are Extracellular-facing. Residues Leu-73 to Tyr-93 form a helical membrane-spanning segment. Over Thr-94–Met-107 the chain is Cytoplasmic. The helical transmembrane segment at Phe-108–Phe-128 threads the bilayer. Residues Thr-129 to Glu-144 lie on the Extracellular side of the membrane. The cysteines at positions 143 and 221 are disulfide-linked. A helical transmembrane segment spans residues Phe-145 to Ala-165. At Leu-166–Ala-188 the chain is on the cytoplasmic side. The helical transmembrane segment at Phe-189–Trp-209 threads the bilayer. Residues Ser-210 to Leu-238 lie on the Extracellular side of the membrane. The helical transmembrane segment at Leu-239–Phe-259 threads the bilayer. The Cytoplasmic segment spans residues Arg-260 to Lys-296. A helical membrane pass occupies residues Ile-297 to Leu-317. The Extracellular portion of the chain corresponds to Val-318 to Ser-332. A helical transmembrane segment spans residues Ser-333–Thr-353. Position 340 is an N6-(retinylidene)lysine (Lys-340). The Cytoplasmic portion of the chain corresponds to His-354 to Met-478. The segment at Leu-440–Met-478 is disordered. Positions Leu-448–Gly-465 are enriched in basic and acidic residues.

It belongs to the G-protein coupled receptor 1 family. Opsin subfamily. In terms of tissue distribution, expressed in the retina.

It is found in the cell membrane. The protein resides in the cell projection. The protein localises to the axon. It localises to the dendrite. Its subcellular location is the perikaryon. Its function is as follows. Photoreceptor that binds cis-retinaldehydes. Contributes to pupillar reflex, photoentrainment and other non-image forming responses to light. May be involved in the optokinetic visual tracking response. May be involved in the regulation of retinal hyaloid vessel growth and regression. The polypeptide is Melanopsin (OPN4) (Homo sapiens (Human)).